A 437-amino-acid polypeptide reads, in one-letter code: Transcription factor TGAL5 (437 aa).

The interval 33–75 (QEPYSNSQSVGSTTDSSSAQNTMSQAELVSPASMRSDSGQEQQ) is disordered. The segment covering 37 to 50 (SNSQSVGSTTDSSS) has biased composition (low complexity). A compositionally biased stretch (polar residues) spans 51–75 (AQNTMSQAELVSPASMRSDSGQEQQ). The region spanning 126–170 (DAKTERRLAQNREAARKSRLRKKAYVQQLETSRIRLQQIEQELQR) is the bZIP domain. Positions 128-148 (KTERRLAQNREAARKSRLRKK) are basic motif. The segment at 154 to 168 (LETSRIRLQQIEQEL) is leucine-zipper. Positions 191-405 (AVMFDMDYTR…RALSSLWASR (215 aa)) constitute a DOG1 domain.

The protein belongs to the bZIP family. As to quaternary structure, interacts with NPR5/NH4, NH5.1 and NH5.2.

It localises to the nucleus. In terms of biological role, transcriptional regulator involved in defense response. This is Transcription factor TGAL5 from Oryza sativa subsp. japonica (Rice).